Consider the following 739-residue polypeptide: Phosphoribosylformylglycinamidine synthase subunit PurL (739 aa).

Residue His-54 is part of the active site. ATP-binding residues include Tyr-57 and Lys-96. Mg(2+) is bound at residue Glu-98. Substrate contacts are provided by residues 99-102 and Arg-121; that span reads SHNH. The active-site Proton acceptor is His-100. Asp-122 is a Mg(2+) binding site. Gln-245 serves as a coordination point for substrate. Residue Asp-273 coordinates Mg(2+). Residue 317-319 participates in substrate binding; the sequence is ESQ. ATP contacts are provided by Asp-500 and Gly-537. Residue Asn-538 participates in Mg(2+) binding. Ser-540 is a substrate binding site.

It belongs to the FGAMS family. In terms of assembly, monomer. Part of the FGAM synthase complex composed of 1 PurL, 1 PurQ and 2 PurS subunits.

Its subcellular location is the cytoplasm. It catalyses the reaction N(2)-formyl-N(1)-(5-phospho-beta-D-ribosyl)glycinamide + L-glutamine + ATP + H2O = 2-formamido-N(1)-(5-O-phospho-beta-D-ribosyl)acetamidine + L-glutamate + ADP + phosphate + H(+). It participates in purine metabolism; IMP biosynthesis via de novo pathway; 5-amino-1-(5-phospho-D-ribosyl)imidazole from N(2)-formyl-N(1)-(5-phospho-D-ribosyl)glycinamide: step 1/2. Its function is as follows. Part of the phosphoribosylformylglycinamidine synthase complex involved in the purines biosynthetic pathway. Catalyzes the ATP-dependent conversion of formylglycinamide ribonucleotide (FGAR) and glutamine to yield formylglycinamidine ribonucleotide (FGAM) and glutamate. The FGAM synthase complex is composed of three subunits. PurQ produces an ammonia molecule by converting glutamine to glutamate. PurL transfers the ammonia molecule to FGAR to form FGAM in an ATP-dependent manner. PurS interacts with PurQ and PurL and is thought to assist in the transfer of the ammonia molecule from PurQ to PurL. This chain is Phosphoribosylformylglycinamidine synthase subunit PurL, found in Bacillus anthracis (strain A0248).